The primary structure comprises 414 residues: Arrestin domain-containing protein 3 (414 aa).

2 consecutive short sequence motifs (PPxY motif) follow at residues 346-349 and 391-394; these read PPSY and PPLY. A disordered region spans residues 393–414; sequence LYSEIDPNPDQSSEDRPSCPSR. Residues 405-414 are compositionally biased toward basic and acidic residues; that stretch reads SEDRPSCPSR.

This sequence belongs to the arrestin family. Interacts (via PPxY motifs) with NEDD4 (via WW domains). Interacts with ADRB2. Interacts with ADRB3. Interacts with HGS (via PPxY motifs). Does not bind TXN (thioredoxin). Interacts with ITCH. In terms of tissue distribution, detected in visceral fat, subcutaneous fat, brown fat and skeletal muscle, and at lower levels in kidney.

The protein localises to the cytoplasm. Its subcellular location is the cell membrane. It is found in the lysosome. It localises to the endosome. The protein resides in the early endosome. Adapter protein that plays a role in regulating cell-surface expression of adrenergic receptors and probably also other G protein-coupled receptors. Plays a role in NEDD4-mediated ubiquitination and endocytosis af activated ADRB2 and subsequent ADRB2 degradation. May recruit NEDD4 to ADRB2. Alternatively, may function as adapter protein that does not play a major role in recruiting NEDD4 to ADRB2, but rather plays a role in a targeting ADRB2 to endosomes. This is Arrestin domain-containing protein 3 (Arrdc3) from Mus musculus (Mouse).